The following is a 117-amino-acid chain: Galanin peptides (117 aa).

Residues 1–19 (MQRCAGFLFLSLILCAALS) form the signal peptide. Residues 20 to 30 (ETFGLVLSAKE) constitute a propeptide that is removed on maturation. Threonine 61 is subject to Threonine amide.

This sequence belongs to the galanin family.

The protein localises to the secreted. Its function is as follows. Endocrine hormone of the central and peripheral nervous systems that binds and activates the G protein-coupled receptors GALR1, GALR2, and GALR3. This small neuropeptide may regulate diverse physiologic functions including contraction of smooth muscle of the gastrointestinal and genitourinary tract, growth hormone and insulin release and adrenal secretion. This is Galanin peptides (GAL) from Coturnix japonica (Japanese quail).